Reading from the N-terminus, the 223-residue chain is DNA mismatch repair protein MutH (223 aa).

It belongs to the MutH family.

The protein localises to the cytoplasm. Sequence-specific endonuclease that cleaves unmethylated GATC sequences. It is involved in DNA mismatch repair. This is DNA mismatch repair protein MutH from Shewanella baltica (strain OS185).